A 242-amino-acid polypeptide reads, in one-letter code: Invasion chromosome antigen R (242 aa).

The protein localises to the secreted. In terms of biological role, may contribute to pathogenesis, although some of its characteristics suggest it is a fossil gene. In Shigella flexneri serotype 5a (strain M90T), this protein is Invasion chromosome antigen R.